A 406-amino-acid chain; its full sequence is Eukaryotic initiation factor 4A-I (406 aa).

The disordered stretch occupies residues 1–21; sequence MSASQDSRSRDNGPDGMEPEG. Residue Ser-2 is modified to N-acetylserine. The residue at position 4 (Ser-4) is a Phosphoserine. The Q motif motif lies at 32-60; the sequence is DSFDDMNLSESLLRGIYAYGFEKPSAIQQ. The 172-residue stretch at 63 to 234 folds into the Helicase ATP-binding domain; it reads ILPCIKGYDV…KKFMRDPIRI (172 aa). 76-83 contacts ATP; the sequence is AQSGTGKT. Residue Lys-118 is modified to N6-acetyllysine. A Glycyl lysine isopeptide (Lys-Gly) (interchain with G-Cter in SUMO2) cross-link involves residue Lys-146. Thr-158 carries the phosphothreonine modification. N6-acetyllysine is present on Lys-174. The DEAD box signature appears at 182–185; it reads DEAD. Lys-193 bears the N6-acetyllysine mark. Residue Lys-225 forms a Glycyl lysine isopeptide (Lys-Gly) (interchain with G-Cter in SUMO2) linkage. Lys-238 bears the N6-acetyllysine; alternate mark. A Glycyl lysine isopeptide (Lys-Gly) (interchain with G-Cter in SUMO2); alternate cross-link involves residue Lys-238. Residues 245–406 form the Helicase C-terminal domain; sequence GIRQFYINVE…EMPLNVADLI (162 aa). Glycyl lysine isopeptide (Lys-Gly) (interchain with G-Cter in SUMO2) cross-links involve residues Lys-309, Lys-369, and Lys-381.

The protein belongs to the DEAD box helicase family. eIF4A subfamily. EIF4F is a multi-subunit complex, the composition of which varies with external and internal environmental conditions. It is composed of at least EIF4A, EIF4E and EIF4G1/EIF4G3. Interacts with PAIP1, EIF4E and UPF2. Found in a complex with XPO7, EIF4A1, ARHGAP1, VPS26A, VPS29, VPS35 and SFN. May interact with NOM1. Interacts with PDCD4; this interferes with the interaction between EIF4A and EIF4G. Interacts with RBM4. Interacts with DDX3X in an RNA-independent manner. Interacts with PKP1 (via N-terminus); the interaction promotes EIF4A1 recruitment to the cap-dependent translation complex and EIF4A1 ATPase activity.

Its subcellular location is the cytoplasm. It localises to the perinuclear region. The protein localises to the cell membrane. The protein resides in the stress granule. The catalysed reaction is ATP + H2O = ADP + phosphate + H(+). Its function is as follows. ATP-dependent RNA helicase which is a subunit of the eIF4F complex involved in cap recognition and is required for mRNA binding to ribosome. In the current model of translation initiation, eIF4A unwinds RNA secondary structures in the 5'-UTR of mRNAs which is necessary to allow efficient binding of the small ribosomal subunit, and subsequent scanning for the initiator codon. As a result, promotes cell proliferation and growth. This chain is Eukaryotic initiation factor 4A-I (EIF4A1), found in Bos taurus (Bovine).